We begin with the raw amino-acid sequence, 481 residues long: Probable glycine dehydrogenase (decarboxylating) subunit 2 (481 aa).

Residues 1–26 (MVIFEKTRGKNSPSVMPSKKGDVSNI) are disordered. K263 is subject to N6-(pyridoxal phosphate)lysine.

This sequence belongs to the GcvP family. C-terminal subunit subfamily. In terms of assembly, the glycine cleavage system is composed of four proteins: P, T, L and H. In this organism, the P 'protein' is a heterodimer of two subunits. It depends on pyridoxal 5'-phosphate as a cofactor.

The enzyme catalyses N(6)-[(R)-lipoyl]-L-lysyl-[glycine-cleavage complex H protein] + glycine + H(+) = N(6)-[(R)-S(8)-aminomethyldihydrolipoyl]-L-lysyl-[glycine-cleavage complex H protein] + CO2. Its function is as follows. The glycine cleavage system catalyzes the degradation of glycine. The P protein binds the alpha-amino group of glycine through its pyridoxal phosphate cofactor; CO(2) is released and the remaining methylamine moiety is then transferred to the lipoamide cofactor of the H protein. The protein is Probable glycine dehydrogenase (decarboxylating) subunit 2 of Francisella tularensis subsp. mediasiatica (strain FSC147).